A 911-amino-acid chain; its full sequence is DNA mismatch repair protein MutS (911 aa).

ATP is bound at residue 660–667; that stretch reads GPNMAGKS.

This sequence belongs to the DNA mismatch repair MutS family.

Its function is as follows. This protein is involved in the repair of mismatches in DNA. It is possible that it carries out the mismatch recognition step. This protein has a weak ATPase activity. The chain is DNA mismatch repair protein MutS from Rhodopseudomonas palustris (strain HaA2).